The primary structure comprises 265 residues: UPF0246 protein NT01EI_0662 (265 aa).

It belongs to the UPF0246 family.

This Edwardsiella ictaluri (strain 93-146) protein is UPF0246 protein NT01EI_0662.